We begin with the raw amino-acid sequence, 247 residues long: Granzyme B (247 aa).

Residues 1 to 18 (MQPILLLLAFLLLPRADA) form the signal peptide. Residues 19 to 20 (GE) constitute a propeptide, activation peptide. The Peptidase S1 domain occupies 21–245 (IIGGHEAKPH…FVHWIKKTMK (225 aa)). Residues Cys49 and Cys65 are joined by a disulfide bond. Catalysis depends on His64, which acts as the Charge relay system. Residues Asn71 and Asn104 are each glycosylated (N-linked (GlcNAc...) asparagine). The active-site Charge relay system is Asp108. 2 cysteine pairs are disulfide-bonded: Cys142/Cys209 and Cys173/Cys188. Ser203 (charge relay system) is an active-site residue.

Belongs to the peptidase S1 family. Granzyme subfamily.

The protein localises to the secreted. The protein resides in the cytolytic granule. The catalysed reaction is Preferential cleavage: -Asp-|-Xaa- &gt;&gt; -Asn-|-Xaa- &gt; -Met-|-Xaa-, -Ser-|-Xaa-.. Its activity is regulated as follows. Inactivated by the serine protease inhibitor diisopropylfluorophosphate. Functionally, abundant protease in the cytosolic granules of cytotoxic T-cells and NK-cells which activates caspase-independent pyroptosis when delivered into the target cell through the immunological synapse. It cleaves after Asp. Once delivered into the target cell, acts by catalyzing cleavage of gasdermin-E (GSDME), releasing the pore-forming moiety of GSDME, thereby triggering pyroptosis and target cell death. Seems to be linked to an activation cascade of caspases (aspartate-specific cysteine proteases) responsible for apoptosis execution. Cleaves caspase-3, -9 and -10 (CASP3, CASP9 and CASP10, respectively) to give rise to active enzymes mediating apoptosis. Cleaves and activates CASP7 in response to bacterial infection, promoting plasma membrane repair. This Homo sapiens (Human) protein is Granzyme B.